Here is a 237-residue protein sequence, read N- to C-terminus: Carbonyl reductase family member 4 (237 aa).

NADP(+)-binding positions include 11–14, 34–35, D57, and 84–86; these read SRGI, RN, and AAG. Position 135 (S135) interacts with substrate. NADP(+)-binding positions include Y148, K152, and 181 to 183; that span reads IHT. Residue Y148 is the Proton acceptor of the active site.

The protein belongs to the short-chain dehydrogenases/reductases (SDR) family. As to quaternary structure, homotetramer (in vitro). Heterotetramer with HSD17B8; contains two molecules each of HSD17B8 and CBR4.

The protein resides in the mitochondrion matrix. It participates in lipid metabolism; fatty acid biosynthesis. In terms of biological role, the heterotetramer with HSD17B8 has NADH-dependent 3-ketoacyl-acyl carrier protein reductase activity, and thereby plays a role in mitochondrial fatty acid biosynthesis. Within the heterotetramer, HSD17B8 binds NADH; CBR4 binds NADPD. The homotetramer has NADPH-dependent quinone reductase activity. Both homotetramer and the heterotetramer have broad in vitro substrate specificity and can reduce 9,10-phenanthrenequinone, 1,4-benzoquinone and various other o-quinones and p-quinones. This Danio rerio (Zebrafish) protein is Carbonyl reductase family member 4 (cbr4).